We begin with the raw amino-acid sequence, 157 residues long: Major allergen Alt a 1 (157 aa).

An N-terminal signal peptide occupies residues 1 to 18; sequence MQFTTIASLFAAAGLAAA. Residues 35–153 enclose the AA1-like domain; it reads EGDYVWKISE…ADAYITLVTL (119 aa). Cystine bridges form between Cys74-Cys89 and Cys128-Cys140.

It belongs to the ALTA1 family. As to quaternary structure, homodimer; disulfide-linked.

It is found in the spore wall. Its subcellular location is the secreted. In terms of biological role, may bind and inhibit the beta-glucanase activity of host plant thaumatin-like proteins. The sequence is that of Major allergen Alt a 1 (ALTA1) from Alternaria alternata (Alternaria rot fungus).